The following is a 247-amino-acid chain: LHFPL tetraspan subfamily member 4 protein (247 aa).

4 helical membrane passes run isoleucine 22–isoleucine 42, phenylalanine 97–phenylalanine 117, isoleucine 127–proline 147, and isoleucine 178–glycine 198.

This sequence belongs to the LHFP family. As to quaternary structure, interacts with GABA(A) receptor subunits. Interacts with GABRB3. Interacts with GABRA2. Interacts with GABRG2. Interacts with GABRA1. Identified in a complex of 720 kDa composed of LHFPL4, NLGN2, GABRA1, GABRB2, GABRG2 and GABRB3. Interacts with NLGN2; leading to mutual regulation of protein level and synaptic clustering. As to expression, highly expressed in the brain, including the cortex, hippocampus, midbrain, olfactory bulb pona plus medulla (at protein level). Expressed in the in the cerebellar granular layer and in granular layer. Colocalized with GPHN at inhibitory synapses. Weakly expressed in heart, testis, lung, intestine, vagina, ovary and uterus.

The protein resides in the cell projection. The protein localises to the dendrite. It localises to the postsynaptic cell membrane. Its function is as follows. Plays a role in the regulation of inhibitory synapse formation and function by being involved in maintening gamma-aminobutyric acid receptors (GABAARs) clustering and their associated scaffold proteins at inhibitory synaptic sites. Acts in concert with NLGN2 to recruit or stabilize GABAARs. The polypeptide is LHFPL tetraspan subfamily member 4 protein (Mus musculus (Mouse)).